Here is a 195-residue protein sequence, read N- to C-terminus: Imidazoleglycerol-phosphate dehydratase (195 aa).

Belongs to the imidazoleglycerol-phosphate dehydratase family.

It is found in the cytoplasm. It carries out the reaction D-erythro-1-(imidazol-4-yl)glycerol 3-phosphate = 3-(imidazol-4-yl)-2-oxopropyl phosphate + H2O. It functions in the pathway amino-acid biosynthesis; L-histidine biosynthesis; L-histidine from 5-phospho-alpha-D-ribose 1-diphosphate: step 6/9. The polypeptide is Imidazoleglycerol-phosphate dehydratase (Deinococcus deserti (strain DSM 17065 / CIP 109153 / LMG 22923 / VCD115)).